An 883-amino-acid chain; its full sequence is MDAPKEIFLKNYTKPDYYFETVDLSFSLGEEKTIVSSKIKVSPRVKGSSAALVLDGHDLKLLSVKVEGKLLKEGDYQLDSRHLTLPSLPAEESFVLEIDTEIYPHKNTSLEGLYKSSGNFCTQCEAEGFRKITFYQDRPDIMAKYTCRVEGDKTLYPVLLSNGNLISQGDIEGGRHYALWEDPFKKPCYLFALVAGQLVSRDDTFTTRSGRQVSLKIWTPAEDLPKTAHAMYSLKAAMKWDEDVFGLEYDLDLFNIVAVPDFNMGAMENKSLNIFNSKLVLASPETATDADYAAILGVIGHEYFHNWTGNRVTCRDWFQLSLKEGLTVFRDQEFSSDMGSRTVKRIADVSKLRIYQFPQDAGPMAHPVRPHSYIKMDNFYTVTVYEKGAEVVRMYKTLLGTQGFRKGIDLYFERHDEQAVTCEDFFAAMRDANNADFANFLQWYSQAGTPVVKVVSSYNADARTFSLKFSQEIPPTPGQPTKEPTFIPVVVGLLDSSGKDITLSSVHHDGTVQTISGSSTILRVTKKEEEFVFSDIPERPVPSLFRGFSAPVRVETDLSNDDLFFLLAHDSDEFNRWEAGQVLARKLMLNLVSDFQQNKPLALNPKFVQGLGSVLSDSSLDKEFIAKAITLPGEGEIMDMMAVADPDAVHAVRKFVRKQLASELKEELLKIVENNRSTEAYVFDHSNMARRALKNTALAYLASLEDPAYMELALNEYKMATNLTDQFAALAALSQNPGKTRDDILADFYNKWQDDYLVVNKWFLLQSTSDIPGNVENVKKLLDHPAFDLRNPNKVYSLIGGFCGSPVNFHAKDGSGYKFLGDIVVQLDKLNPQVASRMVSAFSRWKRYDETRQGLAKAQLEMIMSANGLSENVFEIASKSLAA.

Substrate is bound by residues Glu-125 and 265 to 269 (GAMEN). His-301 contributes to the Zn(2+) binding site. Glu-302 serves as the catalytic Proton acceptor. Zn(2+)-binding residues include His-305 and Glu-324.

This sequence belongs to the peptidase M1 family. Zn(2+) serves as cofactor.

It catalyses the reaction Release of an N-terminal amino acid, preferentially alanine, from a wide range of peptides, amides and arylamides.. With respect to regulation, strongly inhibited by puromycin and DAMPAQ-22. Aminopeptidase with broad substrate specificity for several peptides. Involved in proteolytic events essential for cell growth and viability. Plays an essential role during prophase I of meiosis. Required for correct meiotic reconbination in both male and female gametophytes. The sequence is that of Puromycin-sensitive aminopeptidase (MPA1) from Arabidopsis thaliana (Mouse-ear cress).